Here is a 482-residue protein sequence, read N- to C-terminus: 6-phosphogluconate dehydrogenase, decarboxylating (482 aa).

Residues glycine 17–glycine 22, asparagine 40–serine 42, valine 82–alanine 84, and asparagine 110 contribute to the NADP(+) site. Residues asparagine 110 and serine 136–glycine 138 contribute to the substrate site. Lysine 193 acts as the Proton acceptor in catalysis. Histidine 196–asparagine 197 lines the substrate pocket. Residue glutamate 200 is the Proton donor of the active site. 5 residues coordinate substrate: tyrosine 201, lysine 272, arginine 299, arginine 457, and histidine 463.

This sequence belongs to the 6-phosphogluconate dehydrogenase family. In terms of assembly, homodimer.

The catalysed reaction is 6-phospho-D-gluconate + NADP(+) = D-ribulose 5-phosphate + CO2 + NADPH. Its pathway is carbohydrate degradation; pentose phosphate pathway; D-ribulose 5-phosphate from D-glucose 6-phosphate (oxidative stage): step 3/3. Functionally, catalyzes the oxidative decarboxylation of 6-phosphogluconate to ribulose 5-phosphate and CO(2), with concomitant reduction of NADP to NADPH. This is 6-phosphogluconate dehydrogenase, decarboxylating (gnd) from Synechocystis sp. (strain ATCC 27184 / PCC 6803 / Kazusa).